The chain runs to 481 residues: Glucan endo-1,3-beta-glucosidase 8 (481 aa).

A signal peptide spans methionine 1–alanine 33. N-linked (GlcNAc...) asparagine glycosylation is found at asparagine 99 and asparagine 110. The active-site Proton donor is glutamate 119. 2 N-linked (GlcNAc...) asparagine glycosylation sites follow: asparagine 126 and asparagine 131. Glutamate 265 functions as the Nucleophile in the catalytic mechanism. A disulfide bond links cysteine 367 and cysteine 428. Asparagine 409 and asparagine 440 each carry an N-linked (GlcNAc...) asparagine glycan. Residue serine 455 is the site of GPI-anchor amidated serine attachment. Positions serine 456–phenylalanine 481 are cleaved as a propeptide — removed in mature form.

This sequence belongs to the glycosyl hydrolase 17 family. Contains two additional disulfide bonds.

It is found in the secreted. Its subcellular location is the cell wall. The protein resides in the cell membrane. It carries out the reaction Hydrolysis of (1-&gt;3)-beta-D-glucosidic linkages in (1-&gt;3)-beta-D-glucans.. The protein is Glucan endo-1,3-beta-glucosidase 8 of Arabidopsis thaliana (Mouse-ear cress).